Here is a 230-residue protein sequence, read N- to C-terminus: UPF0173 metal-dependent hydrolase MK1542 (230 aa).

It belongs to the UPF0173 family.

In Methanopyrus kandleri (strain AV19 / DSM 6324 / JCM 9639 / NBRC 100938), this protein is UPF0173 metal-dependent hydrolase MK1542.